The chain runs to 167 residues: Lipoprotein signal peptidase (167 aa).

4 helical membrane-spanning segments follow: residues 8–28 (TFLT…VVLL), 46–66 (WGHF…FGLF), 68–88 (QYKI…ALFL), and 101–121 (VALT…LLYG). Active-site residues include Asp125 and Asp143. The helical transmembrane segment at 139–159 (FNLADAFISIGTLLLIGHLYF) threads the bilayer.

Belongs to the peptidase A8 family.

The protein resides in the cell inner membrane. The enzyme catalyses Release of signal peptides from bacterial membrane prolipoproteins. Hydrolyzes -Xaa-Yaa-Zaa-|-(S,diacylglyceryl)Cys-, in which Xaa is hydrophobic (preferably Leu), and Yaa (Ala or Ser) and Zaa (Gly or Ala) have small, neutral side chains.. The protein operates within protein modification; lipoprotein biosynthesis (signal peptide cleavage). In terms of biological role, this protein specifically catalyzes the removal of signal peptides from prolipoproteins. The sequence is that of Lipoprotein signal peptidase from Chlamydia trachomatis serovar A (strain ATCC VR-571B / DSM 19440 / HAR-13).